An 871-amino-acid chain; its full sequence is Bifunctional cordycepin biosynthesis cluster protein 3 (871 aa).

Its pathway is secondary metabolite biosynthesis. Its function is as follows. Nucleoside/nucleotide kinase; part of the gene cluster that mediates the biosynthesis of cordycepin (COR) and pentostatin (PTN), two adenosine analogs with related bioactivity profiles as both mimic adenosine and can inhibit some of the processes that are adenosine dependent. Within the pathway, cns3 catalyzes both the first step of cordycepin biosynthesis by phosphorylating adenosine into 3'-AMP via its kinase activity and the conversion of adenosine into pentostatin via its ATP phosphoribosyltransferase activity. The first step of cordycepin biosynthesis involves hydroxyl phosphorylation of the 3'-OH position on adenosine to produce adenosine-3'-monophosphate (3'-AMP), catalyzed by kinase activity of cns3. Next, 3'-AMP is dephosphorylated to 2'-carbonyl-3'-deoxyadenosine (2'-C-3'-dA) by cns2, which is finally converted to cordycepin (3'-deoxyadenosine) by the oxidoreductase cns1. The polypeptide is Bifunctional cordycepin biosynthesis cluster protein 3 (Cordyceps militaris (strain CM01) (Caterpillar fungus)).